We begin with the raw amino-acid sequence, 347 residues long: Histidinol-phosphate aminotransferase (347 aa).

Residue Lys209 is modified to N6-(pyridoxal phosphate)lysine.

It belongs to the class-II pyridoxal-phosphate-dependent aminotransferase family. Histidinol-phosphate aminotransferase subfamily. Homodimer. Pyridoxal 5'-phosphate is required as a cofactor.

The catalysed reaction is L-histidinol phosphate + 2-oxoglutarate = 3-(imidazol-4-yl)-2-oxopropyl phosphate + L-glutamate. It functions in the pathway amino-acid biosynthesis; L-histidine biosynthesis; L-histidine from 5-phospho-alpha-D-ribose 1-diphosphate: step 7/9. This Geotalea uraniireducens (strain Rf4) (Geobacter uraniireducens) protein is Histidinol-phosphate aminotransferase.